Here is an 864-residue protein sequence, read N- to C-terminus: Translation initiation factor IF-2 (864 aa).

A disordered region spans residues methionine 1–serine 252. A compositionally biased stretch (basic and acidic residues) spans lysine 78–aspartate 90. The segment covering valine 106–proline 120 has biased composition (polar residues). Residues arginine 150–glycine 212 show a composition bias toward gly residues. The span at histidine 239–serine 252 shows a compositional bias: basic and acidic residues. A tr-type G domain is found at asparagine 359 to lysine 528. The tract at residues glycine 368 to threonine 375 is G1. Glycine 368 to threonine 375 provides a ligand contact to GTP. The tract at residues glycine 393–histidine 397 is G2. The interval aspartate 414–glycine 417 is G3. GTP-binding positions include aspartate 414–histidine 418 and asparagine 468–aspartate 471. The tract at residues asparagine 468–aspartate 471 is G4. The G5 stretch occupies residues serine 504–arginine 506.

The protein belongs to the TRAFAC class translation factor GTPase superfamily. Classic translation factor GTPase family. IF-2 subfamily.

The protein resides in the cytoplasm. Functionally, one of the essential components for the initiation of protein synthesis. Protects formylmethionyl-tRNA from spontaneous hydrolysis and promotes its binding to the 30S ribosomal subunits. Also involved in the hydrolysis of GTP during the formation of the 70S ribosomal complex. In Leptospira borgpetersenii serovar Hardjo-bovis (strain L550), this protein is Translation initiation factor IF-2.